A 134-amino-acid polypeptide reads, in one-letter code: Arsenate reductase (134 aa).

Catalysis depends on nucleophile residues C11, C83, and C90. Disulfide bonds link C11/C83 and C83/C90.

The protein belongs to the low molecular weight phosphotyrosine protein phosphatase family. Thioredoxin-coupled ArsC subfamily.

It localises to the cytoplasm. It catalyses the reaction arsenate + [thioredoxin]-dithiol + H(+) = arsenite + [thioredoxin]-disulfide + H2O. Functionally, catalyzes the reduction of arsenate [As(V)] to arsenite [As(III)]. This Bacillus cereus (strain ATCC 14579 / DSM 31 / CCUG 7414 / JCM 2152 / NBRC 15305 / NCIMB 9373 / NCTC 2599 / NRRL B-3711) protein is Arsenate reductase.